A 97-amino-acid polypeptide reads, in one-letter code: Acylphosphatase (97 aa).

The Acylphosphatase-like domain occupies 9–97; it reads RKHIVVTGLV…ETARAFGVRQ (89 aa). Active-site residues include Arg24 and Asn42.

Belongs to the acylphosphatase family.

The catalysed reaction is an acyl phosphate + H2O = a carboxylate + phosphate + H(+). The sequence is that of Acylphosphatase (acyP) from Bifidobacterium longum (strain NCC 2705).